The primary structure comprises 640 residues: ATP-dependent rRNA helicase spb4 (640 aa).

The short motif at 14–42 (WDAVTPALSEWVLEAMSSMGFTRMTPVQA) is the Q motif element. Residues 45–249 (IPLFMAHKDV…RVGLRNPVKV (205 aa)) form the Helicase ATP-binding domain. 58–65 (AVTGSGKT) lines the ATP pocket. The DEAD box signature appears at 197–200 (DEAD). Residues 283-437 (ALKRILSSVQ…LITFSDADAA (155 aa)) enclose the Helicase C-terminal domain. The stretch at 521–629 (AYKDKQREKR…AAKAAGAKAD (109 aa)) forms a coiled coil. Disordered stretches follow at residues 531 to 595 (RKEL…EKQK) and 607 to 640 (RKKNEEERRLRRAAAKAAGAKADGDDEEEFQGFD). Residues 568 to 582 (KKLKRREQKKSKHEK) show a composition bias toward basic residues. A compositionally biased stretch (basic and acidic residues) spans 583 to 595 (ARWEKMTEEEKQK). Residues 630 to 640 (GDDEEEFQGFD) show a composition bias toward acidic residues.

Belongs to the DEAD box helicase family. DDX55/SPB4 subfamily. In terms of assembly, component of pre-60S ribosomal complexes.

The protein resides in the nucleus. It is found in the nucleolus. It catalyses the reaction ATP + H2O = ADP + phosphate + H(+). Functionally, ATP-binding RNA helicase involved in the biogenesis of 60S ribosomal subunits. Binds 90S pre-ribosomal particles and dissociates from pre-60S ribosomal particles after processing of 27SB pre-rRNA. Required for the normal formation of 18S rRNA through the processing of pre-rRNAs at sites A0, A1 and A2, and the normal formation of 25S and 5.8S rRNAs through the processing of pre-rRNAs at sites C1 and C2. This is ATP-dependent rRNA helicase spb4 from Neosartorya fischeri (strain ATCC 1020 / DSM 3700 / CBS 544.65 / FGSC A1164 / JCM 1740 / NRRL 181 / WB 181) (Aspergillus fischerianus).